Consider the following 215-residue polypeptide: 3-isopropylmalate dehydratase small subunit (215 aa).

It belongs to the LeuD family. LeuD type 1 subfamily. As to quaternary structure, heterodimer of LeuC and LeuD.

The enzyme catalyses (2R,3S)-3-isopropylmalate = (2S)-2-isopropylmalate. It participates in amino-acid biosynthesis; L-leucine biosynthesis; L-leucine from 3-methyl-2-oxobutanoate: step 2/4. Its function is as follows. Catalyzes the isomerization between 2-isopropylmalate and 3-isopropylmalate, via the formation of 2-isopropylmaleate. The sequence is that of 3-isopropylmalate dehydratase small subunit from Xanthomonas oryzae pv. oryzae (strain MAFF 311018).